The primary structure comprises 309 residues: uncharacterized protein (309 aa).

Pro residues-rich tracts occupy residues 1–17 (MTSR…PSPP) and 24–51 (SPVP…PTPR). 2 disordered regions span residues 1–174 (MTSR…PPGV) and 216–240 (PPDL…PLHA). Residues 67–83 (LRSSPSSALNASRGAPS) show a composition bias toward low complexity. Positions 84–112 (TSPPPSSSPPSSPASTPPSRTPSPTPTAP) are enriched in pro residues. 2 stretches are compositionally biased toward low complexity: residues 113 to 125 (ASPV…TPAS) and 135 to 144 (APSSSAALSS). The span at 160–174 (PPPPLPPPLQPPPGV) shows a compositional bias: pro residues. Residues 278–298 (LFLLFTLLSIHFSPFPIFILL) traverse the membrane as a helical segment.

The protein resides in the host membrane. This is an uncharacterized protein from Vitis vinifera (Grape).